Here is a 466-residue protein sequence, read N- to C-terminus: Ribulose bisphosphate carboxylase large chain (466 aa).

K4 bears the N6,N6,N6-trimethyllysine mark. Substrate contacts are provided by N113 and T163. Residue K165 is the Proton acceptor of the active site. K167 contributes to the substrate binding site. Mg(2+) contacts are provided by K191, D193, and E194. Position 191 is an N6-carboxylysine (K191). The Proton acceptor role is filled by H284. Positions 285, 317, and 369 each coordinate substrate.

The protein belongs to the RuBisCO large chain family. Type I subfamily. As to quaternary structure, heterohexadecamer of 8 large chains and 8 small chains; disulfide-linked. The disulfide link is formed within the large subunit homodimers. Mg(2+) serves as cofactor. In terms of processing, the disulfide bond which can form in the large chain dimeric partners within the hexadecamer appears to be associated with oxidative stress and protein turnover.

The protein resides in the plastid. It localises to the chloroplast. It catalyses the reaction 2 (2R)-3-phosphoglycerate + 2 H(+) = D-ribulose 1,5-bisphosphate + CO2 + H2O. It carries out the reaction D-ribulose 1,5-bisphosphate + O2 = 2-phosphoglycolate + (2R)-3-phosphoglycerate + 2 H(+). RuBisCO catalyzes two reactions: the carboxylation of D-ribulose 1,5-bisphosphate, the primary event in carbon dioxide fixation, as well as the oxidative fragmentation of the pentose substrate in the photorespiration process. Both reactions occur simultaneously and in competition at the same active site. This chain is Ribulose bisphosphate carboxylase large chain, found in Barleria prionitis (Porcupine flower).